Here is a 307-residue protein sequence, read N- to C-terminus: Ribosomal RNA small subunit methyltransferase H (307 aa).

Residues 33-35 (GGH), Asp52, Leu83, Asp97, and Gln104 each bind S-adenosyl-L-methionine.

This sequence belongs to the methyltransferase superfamily. RsmH family.

It localises to the cytoplasm. The enzyme catalyses cytidine(1402) in 16S rRNA + S-adenosyl-L-methionine = N(4)-methylcytidine(1402) in 16S rRNA + S-adenosyl-L-homocysteine + H(+). In terms of biological role, specifically methylates the N4 position of cytidine in position 1402 (C1402) of 16S rRNA. The sequence is that of Ribosomal RNA small subunit methyltransferase H from Campylobacter fetus subsp. fetus (strain 82-40).